The sequence spans 1694 residues: Clathrin heavy chain (1694 aa).

Residues 1–478 form a globular terminal domain region; it reads MTNLPIRFQE…HDRKLALSIY (478 aa). WD40-like repeat regions lie at residues 23–67, 68–107, 108–149, 150–195, 196–256, 257–300, and 301–329; these read SIGF…KQMK, TDAAIMNPKEPILALKIGQVLQLISIEQKMQLKSCQMQEP, LEFW…PDLQ, NTEI…QSIE, GHAA…EIGA, SDFP…ISNE, and NIFVTAFEESTNGIIAVNRKGQVLSVSID. Residues 448–464 form a binding site for the uncoating ATPase, involved in lattice disassembly region; it reads EKWLTEDKLECSEQLGD. The segment at 479–522 is flexible linker; the sequence is YRANASDKVITLFAETGEFDKIIAYCKKFNYKPDFMFLLQRMAN. A heavy chain arm region spans residues 523–1694; that stretch reads ANPMGAADFA…QQNYNQYGGF (1172 aa). 7 CHCR repeats span residues 537–681, 687–829, 834–973, 980–1125, 1129–1270, 1275–1421, and 1424–1567; these read KEEG…QNLQ, AVSY…QEDY, IMSV…SLID, LPES…VKEC, FIKA…FRLA, INII…LLIN, and LSVL…NSAF. An involved in binding clathrin light chain region spans residues 1214–1523; it reads AAKVLYTNIS…YLYKKNNRWA (310 aa). Residues 1551–1694 form a trimerization region; that stretch reads GEELLQYFVD…QQNYNQYGGF (144 aa). The stretch at 1610–1640 forms a coiled coil; sequence KVDQLVDDFKARQKKTEEEKEQQNIESSQYQ.

This sequence belongs to the clathrin heavy chain family. In terms of assembly, clathrin coats are formed from molecules containing 3 heavy chains and 3 light chains.

The protein localises to the cytoplasmic vesicle membrane. Its subcellular location is the membrane. The protein resides in the coated pit. Clathrin is the major protein of the polyhedral coat of coated pits and vesicles. The protein is Clathrin heavy chain (chcA) of Dictyostelium discoideum (Social amoeba).